We begin with the raw amino-acid sequence, 558 residues long: GPI mannosyltransferase 3 (558 aa).

The next 4 membrane-spanning stretches (helical) occupy residues 53 to 73, 81 to 101, 164 to 184, and 190 to 210; these read GLRS…LKLL, VWFA…VSVF, AYCG…LLTL, and VPFL…AVVL. N220 is a glycosylation site (N-linked (GlcNAc...) asparagine). The helical transmembrane segment at 234–254 threads the bilayer; that stretch reads IVLTGLIVLVAVLGGVMVLDY. N275 is a glycosylation site (N-linked (GlcNAc...) asparagine). 4 consecutive transmembrane segments (helical) span residues 292–312, 323–343, 348–368, and 372–392; these read VLVG…LVLW, PVLG…LIDH, FVFV…VRWS, and AVVV…IYLM.

This sequence belongs to the glycosyltransferase 22 family. PIGB subfamily.

Its subcellular location is the endoplasmic reticulum membrane. It participates in glycolipid biosynthesis; glycosylphosphatidylinositol-anchor biosynthesis. Functionally, mannosyltransferase involved in glycosylphosphatidylinositol-anchor biosynthesis. Transfers the third alpha-1,2-mannose to Man2-GlcN-acyl-PI during GPI precursor assembly. This Trypanosoma brucei brucei protein is GPI mannosyltransferase 3 (GPI10).